Consider the following 166-residue polypeptide: Peptide deformylase (166 aa).

Fe cation contacts are provided by cysteine 88 and histidine 130. The active site involves glutamate 131. Residue histidine 134 participates in Fe cation binding.

Belongs to the polypeptide deformylase family. It depends on Fe(2+) as a cofactor.

The catalysed reaction is N-terminal N-formyl-L-methionyl-[peptide] + H2O = N-terminal L-methionyl-[peptide] + formate. Its function is as follows. Removes the formyl group from the N-terminal Met of newly synthesized proteins. Requires at least a dipeptide for an efficient rate of reaction. N-terminal L-methionine is a prerequisite for activity but the enzyme has broad specificity at other positions. The polypeptide is Peptide deformylase (Thermoanaerobacter sp. (strain X514)).